The primary structure comprises 439 residues: sn-glycerol-3-phosphate-binding periplasmic protein UgpB (439 aa).

A signal peptide spans 1-25; that stretch reads MFNNAIRKTSICVALTLAFSANAMA. Residues Tyr-67, Glu-91, Ser-146, Ser-272, Gly-309, Tyr-348, and Arg-399 each contribute to the sn-glycerol 3-phosphate site.

This sequence belongs to the bacterial solute-binding protein 1 family. The complex is composed of two ATP-binding proteins (UgpC), two transmembrane proteins (UgpA and UgpE) and a solute-binding protein (UgpB).

The protein localises to the periplasm. Part of the ABC transporter complex UgpBAEC involved in sn-glycerol-3-phosphate (G3P) import. Binds G3P. The polypeptide is sn-glycerol-3-phosphate-binding periplasmic protein UgpB (ugpB) (Yersinia enterocolitica serotype O:8 / biotype 1B (strain NCTC 13174 / 8081)).